We begin with the raw amino-acid sequence, 316 residues long: Ribosomal RNA small subunit methyltransferase H (316 aa).

S-adenosyl-L-methionine-binding positions include 35-37 (AGH), Asp-55, Phe-84, Asp-105, and Gln-112.

The protein belongs to the methyltransferase superfamily. RsmH family.

It is found in the cytoplasm. It carries out the reaction cytidine(1402) in 16S rRNA + S-adenosyl-L-methionine = N(4)-methylcytidine(1402) in 16S rRNA + S-adenosyl-L-homocysteine + H(+). Specifically methylates the N4 position of cytidine in position 1402 (C1402) of 16S rRNA. This is Ribosomal RNA small subunit methyltransferase H from Streptococcus pneumoniae (strain JJA).